The following is a 458-amino-acid chain: tRNA modification GTPase MnmE (458 aa).

(6S)-5-formyl-5,6,7,8-tetrahydrofolate is bound by residues Arg23, Glu80, and Lys122. The TrmE-type G domain occupies 218-380; it reads GMKIVIAGRP…LREHLQQTMG (163 aa). Asn228 provides a ligand contact to K(+). GTP is bound by residues 228 to 233, 247 to 253, 272 to 275, and 361 to 363; these read NVGKSS, TQIPGTT, DTAG, and SAR. A Mg(2+)-binding site is contributed by Ser232. K(+) is bound by residues Thr247, Ile249, and Thr252. Thr253 is a Mg(2+) binding site. Residue Lys458 participates in (6S)-5-formyl-5,6,7,8-tetrahydrofolate binding.

Belongs to the TRAFAC class TrmE-Era-EngA-EngB-Septin-like GTPase superfamily. TrmE GTPase family. Homodimer. Heterotetramer of two MnmE and two MnmG subunits. K(+) is required as a cofactor.

It is found in the cytoplasm. Exhibits a very high intrinsic GTPase hydrolysis rate. Involved in the addition of a carboxymethylaminomethyl (cmnm) group at the wobble position (U34) of certain tRNAs, forming tRNA-cmnm(5)s(2)U34. The chain is tRNA modification GTPase MnmE from Hamiltonella defensa subsp. Acyrthosiphon pisum (strain 5AT).